Here is a 273-residue protein sequence, read N- to C-terminus: MTAAETGRGKPRLGGGSGLGGSPAAVVWLHVGATGRDAVSPREPVVAAQAAGRPLKLPRRLLRQPTPGLRGAESGPTVDMPVPSSFNDIGQGWRLRHFVSWLWYEREVTLLERWIQDLCTRVVLRIGSAHFYAIVWVNGVDTVEHEGGYLPFEADISSLFQVEPLPSHLCITIAINNTLTPQPCHQGPSVHDRHLQVGTILPPLHAPTFPPHPVVFLPGTGYPKGYFVQNTDFDFFSYAGLLWSLLLYTTPPTYIDDVTVTTGVKRDSGEGFW.

A disordered region spans residues 1 to 20 (MTAAETGRGKPRLGGGSGLG).

It belongs to the glycosyl hydrolase 2 family.

The sequence is that of Putative inactive beta-glucuronidase protein GUSBP11 (GUSBP11) from Homo sapiens (Human).